Reading from the N-terminus, the 142-residue chain is Large ribosomal subunit protein uL13 (142 aa).

It belongs to the universal ribosomal protein uL13 family. As to quaternary structure, part of the 50S ribosomal subunit.

Functionally, this protein is one of the early assembly proteins of the 50S ribosomal subunit, although it is not seen to bind rRNA by itself. It is important during the early stages of 50S assembly. In Vesicomyosocius okutanii subsp. Calyptogena okutanii (strain HA), this protein is Large ribosomal subunit protein uL13.